Reading from the N-terminus, the 45-residue chain is Amphipathic peptide Hj0164 (45 aa).

Positions 1-23 (MKSQAFFLLFLVVLLLATTQSEA) are cleaved as a signal peptide. Position 33 is a phenylalanine amide (phenylalanine 33). Residues 37–45 (SLRDVDTMK) constitute a propeptide that is removed on maturation.

This sequence belongs to the non-disulfide-bridged peptide (NDBP) superfamily. Short antimicrobial peptide (group 4) family. Expressed by the venom gland.

It is found in the secreted. The protein localises to the target cell membrane. Its function is as follows. Amphipathic peptide that shows antibacterial activities. The polypeptide is Amphipathic peptide Hj0164 (Hottentotta judaicus (Black scorpion)).